A 204-amino-acid chain; its full sequence is Putative glutathione S-transferase alpha-3 (204 aa).

The residue at position 2 (Thr2) is an N-acetylthreonine. In terms of domain architecture, GST N-terminal spans 2–79; sequence TKPQLSYFKV…YIASQHDFVG (78 aa). Glutathione is bound by residues Tyr8, 49 to 50, and 63 to 64; these read QL and QS. The region spanning 81 to 202 is the GST C-terminal domain; that stretch reads TPEEKALVDE…YLKNRPITER (122 aa).

Belongs to the GST superfamily. Alpha family.

It catalyses the reaction RX + glutathione = an S-substituted glutathione + a halide anion + H(+). Conjugation of reduced glutathione to a wide number of exogenous and endogenous hydrophobic electrophiles. This Dictyostelium discoideum (Social amoeba) protein is Putative glutathione S-transferase alpha-3 (gsta3).